A 410-amino-acid polypeptide reads, in one-letter code: D-amino acid dehydrogenase (410 aa).

9–14 contacts FAD; sequence GGGIVG.

This sequence belongs to the DadA oxidoreductase family. Requires FAD as cofactor.

It is found in the cell inner membrane. It catalyses the reaction a D-alpha-amino acid + a quinone + H2O = a 2-oxocarboxylate + a quinol + NH4(+). With respect to regulation, activity is markedly inhibited by benzoate, and moderately by SH reagents such as p-hydroxymercuribenzoate, iodoacetamide, and iodoacetate. In terms of biological role, catalyzes the oxidative deamination of D-amino acids. Has broad substrate specificity; is mostly active on D-proline, and to a lesser extent, on several other D-amino acids such as D-alanine, D-phenylalanine and D-serine. Mediates electron transport from D-proline to coenzyme Q1 in vitro, and is involved in the electron transport chain from D-proline to the c-type cytochrome in vivo. In Helicobacter pylori (Campylobacter pylori), this protein is D-amino acid dehydrogenase.